Here is a 707-residue protein sequence, read N- to C-terminus: Serine/threonine protein kinase UL97 (707 aa).

Positions 1 to 14 (MSSALRSRARSASL) are enriched in low complexity. Disordered stretches follow at residues 1 to 32 (MSSA…PSRA), 115 to 146 (EKED…GDGY), 176 to 199 (FTGG…PLRP), and 231 to 264 (ESQD…EADS). Residues 115–127 (EKEDAASDKENLR) show a composition bias toward basic and acidic residues. Positions 178 to 188 (GGSDPSDSVSG) are enriched in low complexity. Residues 337 to 345 (LGQGSFGEV) and lysine 359 each bind ATP. Aspartate 456 acts as the Proton acceptor in catalysis.

It belongs to the protein kinase superfamily. Tyr protein kinase family. HCMV ganciclovir subfamily. Interacts with UL83. Post-translationally, autophosphorylates on serine and threonine residues.

The protein resides in the virion. It catalyses the reaction L-seryl-[protein] + ATP = O-phospho-L-seryl-[protein] + ADP + H(+). The enzyme catalyses L-threonyl-[protein] + ATP = O-phospho-L-threonyl-[protein] + ADP + H(+). In terms of biological role, serine/threonine protein kinase that plays important roles in several processes including nuclear viral egress, viral replication or regulation of host cell cycle progression. Participates in the acquisition of tegument during virion morphogenesis in the nucleus. Redistributes the host nuclear lamina by phosphorylating cellular Lamins-A/C. Plays a role in viral DNA synthesis by phosphorylating the DNA polymerase processivity factor UL44. Stimulates host cell cycle to support viral DNA synthesis by phosphorylating host retinoblastoma/RB1 protein. Additional substrates have been identified including host EF1D or H2B. Also phosphorylates host SAMHD1 and thereby counteracts its antiviral effect by reducing its dNTP hydrolase activity. The chain is Serine/threonine protein kinase UL97 (UL97) from Human cytomegalovirus (strain Towne) (HHV-5).